Consider the following 95-residue polypeptide: Aspartyl/glutamyl-tRNA(Asn/Gln) amidotransferase subunit C (95 aa).

Belongs to the GatC family. As to quaternary structure, heterotrimer of A, B and C subunits.

It carries out the reaction L-glutamyl-tRNA(Gln) + L-glutamine + ATP + H2O = L-glutaminyl-tRNA(Gln) + L-glutamate + ADP + phosphate + H(+). The enzyme catalyses L-aspartyl-tRNA(Asn) + L-glutamine + ATP + H2O = L-asparaginyl-tRNA(Asn) + L-glutamate + ADP + phosphate + 2 H(+). Functionally, allows the formation of correctly charged Asn-tRNA(Asn) or Gln-tRNA(Gln) through the transamidation of misacylated Asp-tRNA(Asn) or Glu-tRNA(Gln) in organisms which lack either or both of asparaginyl-tRNA or glutaminyl-tRNA synthetases. The reaction takes place in the presence of glutamine and ATP through an activated phospho-Asp-tRNA(Asn) or phospho-Glu-tRNA(Gln). In Cereibacter sphaeroides (strain ATCC 17025 / ATH 2.4.3) (Rhodobacter sphaeroides), this protein is Aspartyl/glutamyl-tRNA(Asn/Gln) amidotransferase subunit C.